We begin with the raw amino-acid sequence, 518 residues long: WEB family protein At2g40480 (518 aa).

2 coiled-coil regions span residues Asp95–Glu141 and Asp188–Thr219. Residues Asn303–Asp337 are disordered. Residues Leu328–Asp337 are compositionally biased toward basic and acidic residues. A coiled-coil region spans residues Ile344–Lys375.

It belongs to the WEB family.

This Arabidopsis thaliana (Mouse-ear cress) protein is WEB family protein At2g40480.